A 20-amino-acid chain; its full sequence is 23 kDa cell wall protein (20 aa).

Its subcellular location is the secreted. It localises to the cell wall. This chain is 23 kDa cell wall protein, found in Arabidopsis thaliana (Mouse-ear cress).